Reading from the N-terminus, the 235-residue chain is uncharacterized protein (235 aa).

The next 7 helical transmembrane spans lie at 2–22 (VIGP…GALL), 34–54 (MTSI…VKCA), 56–76 (LPAM…CLLE), 102–122 (FIQN…GIFG), 147–167 (MIFA…LLII), 178–198 (ILPL…GLLL), and 210–230 (MFPV…SAAW).

The protein resides in the cell membrane. This is an uncharacterized protein from Escherichia coli (strain K12).